Reading from the N-terminus, the 223-residue chain is Ribosomal RNA small subunit methyltransferase G (223 aa).

Residues Gly82, Leu87, 133-134, and Arg151 each bind S-adenosyl-L-methionine; that span reads AE.

Belongs to the methyltransferase superfamily. RNA methyltransferase RsmG family.

Its subcellular location is the cytoplasm. In terms of biological role, specifically methylates the N7 position of guanine in position 518 of 16S rRNA. In Corynebacterium glutamicum (strain ATCC 13032 / DSM 20300 / JCM 1318 / BCRC 11384 / CCUG 27702 / LMG 3730 / NBRC 12168 / NCIMB 10025 / NRRL B-2784 / 534), this protein is Ribosomal RNA small subunit methyltransferase G.